A 265-amino-acid polypeptide reads, in one-letter code: NAD kinase (265 aa).

Catalysis depends on Asp45, which acts as the Proton acceptor. NAD(+) is bound by residues 45-46, 121-122, Arg147, Asp149, Ala184, and Gln221; these read DG and NE.

It belongs to the NAD kinase family. Requires a divalent metal cation as cofactor.

It is found in the cytoplasm. It carries out the reaction NAD(+) + ATP = ADP + NADP(+) + H(+). In terms of biological role, involved in the regulation of the intracellular balance of NAD and NADP, and is a key enzyme in the biosynthesis of NADP. Catalyzes specifically the phosphorylation on 2'-hydroxyl of the adenosine moiety of NAD to yield NADP. This Leuconostoc citreum (strain KM20) protein is NAD kinase.